An 88-amino-acid chain; its full sequence is Probable small nuclear ribonucleoprotein F (88 aa).

The region spanning Asn-7–Asp-79 is the Sm domain.

It belongs to the snRNP Sm proteins family. SmF/LSm6 subfamily.

The protein resides in the nucleus. Probable common Sm protein, is found in U1 and U2 snRNPs and may be part of the spliceosome. The chain is Probable small nuclear ribonucleoprotein F from Arabidopsis thaliana (Mouse-ear cress).